A 97-amino-acid chain; its full sequence is YcgL domain-containing protein PputGB1_4120 (97 aa).

One can recognise a YcgL domain in the interval 3–87; sequence RICSIYKSPR…AEDEYIEHLP (85 aa).

This Pseudomonas putida (strain GB-1) protein is YcgL domain-containing protein PputGB1_4120.